Here is a 287-residue protein sequence, read N- to C-terminus: Nucleotide-binding protein Gbem_0872 (287 aa).

Gly-8 to Ser-15 lines the ATP pocket. GTP is bound at residue Asp-59–Ser-62.

This sequence belongs to the RapZ-like family.

Functionally, displays ATPase and GTPase activities. This chain is Nucleotide-binding protein Gbem_0872, found in Citrifermentans bemidjiense (strain ATCC BAA-1014 / DSM 16622 / JCM 12645 / Bem) (Geobacter bemidjiensis).